Consider the following 306-residue polypeptide: Curved DNA-binding protein (306 aa).

Residues 5-69 (DYYAIMGVKP…QRRAEYDQLW (65 aa)) form the J domain.

It localises to the cytoplasm. Its subcellular location is the nucleoid. Functionally, DNA-binding protein that preferentially recognizes a curved DNA sequence. It is probably a functional analog of DnaJ; displays overlapping activities with DnaJ, but functions under different conditions, probably acting as a molecular chaperone in an adaptive response to environmental stresses other than heat shock. Lacks autonomous chaperone activity; binds native substrates and targets them for recognition by DnaK. Its activity is inhibited by the binding of CbpM. In Salmonella choleraesuis (strain SC-B67), this protein is Curved DNA-binding protein.